The chain runs to 392 residues: F-box protein At5g65850 (392 aa).

In terms of domain architecture, F-box spans 29-78 (TEKSVQIPVDIIIEILLRLPAKSIATCRCVSKLWISVICRQDFTELFLTR).

In Arabidopsis thaliana (Mouse-ear cress), this protein is F-box protein At5g65850.